A 93-amino-acid polypeptide reads, in one-letter code: uncharacterized protein (93 aa).

A disordered region spans residues Arg41–Thr62. The span at Ile46–Thr62 shows a compositional bias: low complexity.

This is an uncharacterized protein from Dictyostelium discoideum (Social amoeba).